A 103-amino-acid chain; its full sequence is Large ribosomal subunit protein bL21 (103 aa).

This sequence belongs to the bacterial ribosomal protein bL21 family. In terms of assembly, part of the 50S ribosomal subunit. Contacts protein L20.

Functionally, this protein binds to 23S rRNA in the presence of protein L20. This chain is Large ribosomal subunit protein bL21, found in Mycolicibacterium smegmatis (strain ATCC 700084 / mc(2)155) (Mycobacterium smegmatis).